A 216-amino-acid chain; its full sequence is Adenylate kinase (216 aa).

Position 10–15 (10–15 (GAGKGT)) interacts with ATP. An NMP region spans residues 30–59 (STGDMFRAAMKAETEMGLQAKSFIDKGALV). AMP is bound by residues Thr-31, Arg-36, 57–59 (ALV), 85–88 (GFPR), and Gln-92. The interval 126 to 163 (GRRICKECGATYHLEFNPPAKADVCDKCGGELYQRSDD) is LID. Arg-127 is a binding site for ATP. 2 residues coordinate Zn(2+): Cys-130 and Cys-133. Position 136 to 137 (136 to 137 (TY)) interacts with ATP. Positions 150 and 153 each coordinate Zn(2+). Residues Arg-160 and Arg-171 each coordinate AMP. Residue Gln-199 coordinates ATP.

It belongs to the adenylate kinase family. In terms of assembly, monomer.

The protein resides in the cytoplasm. The catalysed reaction is AMP + ATP = 2 ADP. Its pathway is purine metabolism; AMP biosynthesis via salvage pathway; AMP from ADP: step 1/1. In terms of biological role, catalyzes the reversible transfer of the terminal phosphate group between ATP and AMP. Plays an important role in cellular energy homeostasis and in adenine nucleotide metabolism. The chain is Adenylate kinase from Bacillus cereus (strain G9842).